The following is a 184-amino-acid chain: ADP-ribosylation factor-like protein 2 (184 aa).

Gly-2 carries the N-myristoyl glycine lipid modification. GTP-binding positions include 23–30, 66–70, and 125–128; these read GLDNAGKT, DVGGQ, and NKQD.

It belongs to the small GTPase superfamily. Arf family. In terms of tissue distribution, ubiquitously expressed.

Functionally, GTP-binding protein involved in protein trafficking; may modulate vesicle budding and uncoating within the Golgi apparatus. The sequence is that of ADP-ribosylation factor-like protein 2 (Arl2) from Drosophila melanogaster (Fruit fly).